The primary structure comprises 465 residues: Fumarate hydratase class II (465 aa).

Residues 99 to 101 (SGT), 130 to 133 (HPND), 140 to 142 (STN), and T188 each bind substrate. Residue H189 is the Proton donor/acceptor of the active site. S319 is an active-site residue. Substrate contacts are provided by residues S320 and 325–327 (KVN).

The protein belongs to the class-II fumarase/aspartase family. Fumarase subfamily. As to quaternary structure, homotetramer.

Its subcellular location is the cytoplasm. The enzyme catalyses (S)-malate = fumarate + H2O. Its pathway is carbohydrate metabolism; tricarboxylic acid cycle; (S)-malate from fumarate: step 1/1. Functionally, involved in the TCA cycle. Catalyzes the stereospecific interconversion of fumarate to L-malate. This Prochlorococcus marinus (strain SARG / CCMP1375 / SS120) protein is Fumarate hydratase class II.